The primary structure comprises 275 residues: tRNA (guanine-N(1)-)-methyltransferase (275 aa).

Residues G124 and 149–154 (IGDYVL) each bind S-adenosyl-L-methionine.

It belongs to the RNA methyltransferase TrmD family. Homodimer.

The protein localises to the cytoplasm. It carries out the reaction guanosine(37) in tRNA + S-adenosyl-L-methionine = N(1)-methylguanosine(37) in tRNA + S-adenosyl-L-homocysteine + H(+). Functionally, specifically methylates guanosine-37 in various tRNAs. This is tRNA (guanine-N(1)-)-methyltransferase from Bifidobacterium animalis subsp. lactis (strain AD011).